A 234-amino-acid polypeptide reads, in one-letter code: ATP-dependent dethiobiotin synthetase BioD (234 aa).

14–19 (GVGKTI) lines the ATP pocket. Residue threonine 18 participates in Mg(2+) binding. Lysine 39 is a catalytic residue. Serine 43 serves as a coordination point for substrate. ATP contacts are provided by residues aspartate 56, 118–121 (EGAG), 178–179 (NH), and 208–210 (PWL). Residues aspartate 56 and glutamate 118 each contribute to the Mg(2+) site.

Belongs to the dethiobiotin synthetase family. Homodimer. Mg(2+) is required as a cofactor.

Its subcellular location is the cytoplasm. It carries out the reaction (7R,8S)-7,8-diammoniononanoate + CO2 + ATP = (4R,5S)-dethiobiotin + ADP + phosphate + 3 H(+). It functions in the pathway cofactor biosynthesis; biotin biosynthesis; biotin from 7,8-diaminononanoate: step 1/2. In terms of biological role, catalyzes a mechanistically unusual reaction, the ATP-dependent insertion of CO2 between the N7 and N8 nitrogen atoms of 7,8-diaminopelargonic acid (DAPA, also called 7,8-diammoniononanoate) to form a ureido ring. This Marinobacter nauticus (strain ATCC 700491 / DSM 11845 / VT8) (Marinobacter aquaeolei) protein is ATP-dependent dethiobiotin synthetase BioD.